The chain runs to 102 residues: Flagellar hook-basal body complex protein FliE 1 (102 aa).

This sequence belongs to the FliE family.

It is found in the bacterial flagellum basal body. This Bradyrhizobium diazoefficiens (strain JCM 10833 / BCRC 13528 / IAM 13628 / NBRC 14792 / USDA 110) protein is Flagellar hook-basal body complex protein FliE 1 (fliE1).